Reading from the N-terminus, the 464-residue chain is 3-isopropylmalate dehydratase large subunit (464 aa).

Cysteine 337, cysteine 397, and cysteine 400 together coordinate [4Fe-4S] cluster.

Belongs to the aconitase/IPM isomerase family. LeuC type 1 subfamily. In terms of assembly, heterodimer of LeuC and LeuD. [4Fe-4S] cluster serves as cofactor.

It catalyses the reaction (2R,3S)-3-isopropylmalate = (2S)-2-isopropylmalate. Its pathway is amino-acid biosynthesis; L-leucine biosynthesis; L-leucine from 3-methyl-2-oxobutanoate: step 2/4. In terms of biological role, catalyzes the isomerization between 2-isopropylmalate and 3-isopropylmalate, via the formation of 2-isopropylmaleate. This is 3-isopropylmalate dehydratase large subunit from Bacillus cereus (strain ZK / E33L).